Reading from the N-terminus, the 68-residue chain is Protease A inhibitor 3 (68 aa).

At Met1 the chain carries N-acetylmethionine. Residues 1–14 are compositionally biased toward polar residues; it reads MNTDQQKVSEIFQS. 2 disordered regions span residues 1 to 21 and 33 to 68; these read MNTDQQKVSEIFQSSKEKLQG and MASQDKDGKTTDADESEKHNYQEQYNKLKGAGHKKE. An inhibitory domain region spans residues 1–32; sequence MNTDQQKVSEIFQSSKEKLQGDAKVVSDAFKK. The span at 33–53 shows a compositional bias: basic and acidic residues; that stretch reads MASQDKDGKTTDADESEKHNY.

The protein belongs to the protease inhibitor I34 family.

Its function is as follows. Specific and potent inhibitor for yeast aspartic protease A (yscA). The proteinase acts as a folding template stabilizing the helical conformation in the inhibitor, which results in the potent and specific blockage of the proteolytic activity. This chain is Protease A inhibitor 3 (PAI3), found in Saccharomyces cerevisiae (strain ATCC 204508 / S288c) (Baker's yeast).